We begin with the raw amino-acid sequence, 302 residues long: MENKPQILQTKSKNTPNKGGKLSINDFEIGRPLGKGKFGSVYLARTKTGHFHCAIKVLFKSQLISGGVEHQLEREIEIQSHLQHPNIIRLYNYFWDAKKIYLILEYAPGGEMYKQLTTQKRFTEAMAGKYMYEIADALSYCHRKNVIHRDIKPENLLIGAQGELKIGDFGWSVHAPSNKRQTMCGTMDYLPPEMVNGNSHSDAVDLWAIGVLCYEFLVGKPPFEHENQADTYSAIKAGRFTYPDFVKKGARDLIGKLLVVDPRRRCSLQEVKDHYWVTSMLDSCRRAAEKQKAERAASLRDH.

Residues Met1–Asn17 are compositionally biased toward polar residues. Residues Met1–Ser23 form a disordered region. A Protein kinase domain is found at Phe27 to Val277. ATP-binding positions include Leu33–Val41 and Lys56. The Proton acceptor role is filled by Asp150.

This sequence belongs to the protein kinase superfamily. Ser/Thr protein kinase family. Interacts with zen-4 and icp-1. Part of a complex containing at least air-2; icp-1; csc-1 and bir-1. Interacts with tlk-1 and bmk-1.

The protein localises to the cytoplasm. It localises to the cytoskeleton. The protein resides in the chromosome. It is found in the midbody. The catalysed reaction is L-seryl-[protein] + ATP = O-phospho-L-seryl-[protein] + ADP + H(+). It carries out the reaction L-threonyl-[protein] + ATP = O-phospho-L-threonyl-[protein] + ADP + H(+). Serine/threonine-protein kinase which mediates both meiotic and mitotic chromosome segregation. Required for histone H3 'Ser-10' phosphorylation. Phosphorylates tlk-1 and zen-4. In Caenorhabditis briggsae, this protein is Aurora/IPL1-related protein kinase 2 (air-2).